The primary structure comprises 314 residues: Acetaldehyde dehydrogenase (314 aa).

Ser-14 to Ile-17 serves as a coordination point for NAD(+). The active-site Acyl-thioester intermediate is Cys-132. NAD(+)-binding positions include Ser-163–Asn-171 and Asn-291.

Belongs to the acetaldehyde dehydrogenase family.

It carries out the reaction acetaldehyde + NAD(+) + CoA = acetyl-CoA + NADH + H(+). The protein is Acetaldehyde dehydrogenase of Polaromonas sp. (strain JS666 / ATCC BAA-500).